The following is a 117-amino-acid chain: Large ribosomal subunit protein bL20 (117 aa).

The protein belongs to the bacterial ribosomal protein bL20 family.

Functionally, binds directly to 23S ribosomal RNA and is necessary for the in vitro assembly process of the 50S ribosomal subunit. It is not involved in the protein synthesizing functions of that subunit. This chain is Large ribosomal subunit protein bL20, found in Solidesulfovibrio magneticus (strain ATCC 700980 / DSM 13731 / RS-1) (Desulfovibrio magneticus).